The sequence spans 828 residues: Phenylalanine--tRNA ligase beta subunit (828 aa).

One can recognise a tRNA-binding domain in the interval Leu43–Leu161. Residues Lys203–Asn230 form a disordered region. Positions Arg436–Pro519 constitute a B5 domain. The Mg(2+) site is built by Asp497, Asp503, and Asp507. An FDX-ACB domain is found at Pro736–Arg828.

Belongs to the phenylalanyl-tRNA synthetase beta subunit family. Type 1 subfamily. As to quaternary structure, tetramer of two alpha and two beta subunits. The cofactor is Mg(2+).

It is found in the cytoplasm. It catalyses the reaction tRNA(Phe) + L-phenylalanine + ATP = L-phenylalanyl-tRNA(Phe) + AMP + diphosphate + H(+). The sequence is that of Phenylalanine--tRNA ligase beta subunit from Aster yellows witches'-broom phytoplasma (strain AYWB).